Here is a 260-residue protein sequence, read N- to C-terminus: MFSSSFSYPSKTSPLTSPFLAEHSSASGRRLEHRSLCDHEPRHQYRPPWEWNPYPTNGPIASPTCFDFPQDHQGLPSPSGVIFNPSDRFLYAPSGPHFQRGFPAEPRALLGRYSAFGSDSQLFFHDGRNRVLPPGFDQFFDYAAEGMKERITPGIRPGQVDPAEWLRSPDGESSEERAGTDSVEAPEEKEDAHSSGGCGEKPCTRRKKRCPYSKQQIIELEREFLFNIYINKDRRMQLSHLLRLTDRCVNNPLNQDSFFT.

The span at 1–14 shows a compositional bias: low complexity; the sequence is MFSSSFSYPSKTSP. 2 disordered regions span residues 1–21 and 151–206; these read MFSS…PFLA and ITPG…CTRR. Over residues 167 to 179 the composition is skewed to basic and acidic residues; it reads RSPDGESSEERAG. Positions 205–260 form a DNA-binding region, homeobox; truncated; the sequence is RRKKRCPYSKQQIIELEREFLFNIYINKDRRMQLSHLLRLTDRCVNNPLNQDSFFT.

It belongs to the Abd-B homeobox family.

It localises to the nucleus. In terms of biological role, sequence-specific transcription factor which is part of a developmental regulatory system that provides cells with specific positional identities on the anterior-posterior axis. The polypeptide is Homeobox protein Hox-D11b (hoxd11b) (Takifugu rubripes (Japanese pufferfish)).